The chain runs to 100 residues: Large ribosomal subunit protein uL23 (100 aa).

It belongs to the universal ribosomal protein uL23 family. In terms of assembly, part of the 50S ribosomal subunit. Contacts protein L29, and trigger factor when it is bound to the ribosome.

In terms of biological role, one of the early assembly proteins it binds 23S rRNA. One of the proteins that surrounds the polypeptide exit tunnel on the outside of the ribosome. Forms the main docking site for trigger factor binding to the ribosome. The polypeptide is Large ribosomal subunit protein uL23 (Mycobacterium tuberculosis (strain ATCC 25177 / H37Ra)).